The following is a 241-amino-acid chain: ATP synthase subunit a (241 aa).

Helical transmembrane passes span Gly-30–Gly-50, Phe-91–Trp-111, Ile-128–Ser-148, Leu-193–Leu-213, and Gly-214–Gly-234.

It belongs to the ATPase A chain family. As to quaternary structure, F-type ATPases have 2 components, CF(1) - the catalytic core - and CF(0) - the membrane proton channel. CF(1) has five subunits: alpha(3), beta(3), gamma(1), delta(1), epsilon(1). CF(0) has four main subunits: a, b, b' and c.

It is found in the cellular thylakoid membrane. Its function is as follows. Key component of the proton channel; it plays a direct role in the translocation of protons across the membrane. The chain is ATP synthase subunit a from Prochlorococcus marinus (strain SARG / CCMP1375 / SS120).